Consider the following 217-residue polypeptide: MNLVTRPGRVGIMGGTFDPIHYGHLVTAEAARWEFALQKVIFVPSGRPPHKKDYPVTDAEYRYQMTLLATASNPYFEVSRSEIDREGFSYTVDTVAEFRREYGPEVQLYFITGADAILEILTWKDVDTLLRECHFIAATRPGFQLNRLEESRPQLPVEGRHRIHLIEVPALAISSTDIRWRVKNNKPIKYLLPEAVEEYIRSRGLYRPRLDGVYEKG.

The protein belongs to the NadD family.

The catalysed reaction is nicotinate beta-D-ribonucleotide + ATP + H(+) = deamido-NAD(+) + diphosphate. Its pathway is cofactor biosynthesis; NAD(+) biosynthesis; deamido-NAD(+) from nicotinate D-ribonucleotide: step 1/1. Catalyzes the reversible adenylation of nicotinate mononucleotide (NaMN) to nicotinic acid adenine dinucleotide (NaAD). This is Probable nicotinate-nucleotide adenylyltransferase from Moorella thermoacetica (strain ATCC 39073 / JCM 9320).